A 149-amino-acid polypeptide reads, in one-letter code: D-aminoacyl-tRNA deacylase (149 aa).

Residues 137–138 (GP) carry the Gly-cisPro motif, important for rejection of L-amino acids motif.

It belongs to the DTD family. As to quaternary structure, homodimer.

It localises to the cytoplasm. It catalyses the reaction glycyl-tRNA(Ala) + H2O = tRNA(Ala) + glycine + H(+). The enzyme catalyses a D-aminoacyl-tRNA + H2O = a tRNA + a D-alpha-amino acid + H(+). An aminoacyl-tRNA editing enzyme that deacylates mischarged D-aminoacyl-tRNAs. Also deacylates mischarged glycyl-tRNA(Ala), protecting cells against glycine mischarging by AlaRS. Acts via tRNA-based rather than protein-based catalysis; rejects L-amino acids rather than detecting D-amino acids in the active site. By recycling D-aminoacyl-tRNA to D-amino acids and free tRNA molecules, this enzyme counteracts the toxicity associated with the formation of D-aminoacyl-tRNA entities in vivo and helps enforce protein L-homochirality. In Clostridioides difficile (strain 630) (Peptoclostridium difficile), this protein is D-aminoacyl-tRNA deacylase.